We begin with the raw amino-acid sequence, 89 residues long: Teretoxin Tan6.8 (89 aa).

The N-terminal stretch at 1-21 (MRLLLILLLLTPVILAGSLDE) is a signal peptide. Residues 22-42 (EPNNADGANAASFTADQEGRH) form a disordered region. Residues 22–44 (EPNNADGANAASFTADQEGRHKR) constitute a propeptide that is removed on maturation.

Post-translationally, contains 3 disulfide bonds. In terms of tissue distribution, expressed by the venom duct.

The protein localises to the secreted. This is Teretoxin Tan6.8 from Terebra anilis (Auger snail).